A 426-amino-acid polypeptide reads, in one-letter code: Enolase (426 aa).

Q163 provides a ligand contact to (2R)-2-phosphoglycerate. The Proton donor role is filled by E205. Residues D242, E286, and D313 each coordinate Mg(2+). (2R)-2-phosphoglycerate-binding residues include K338, R367, S368, and K389. K338 serves as the catalytic Proton acceptor.

Belongs to the enolase family. It depends on Mg(2+) as a cofactor.

Its subcellular location is the cytoplasm. It is found in the secreted. The protein localises to the cell surface. It catalyses the reaction (2R)-2-phosphoglycerate = phosphoenolpyruvate + H2O. The protein operates within carbohydrate degradation; glycolysis; pyruvate from D-glyceraldehyde 3-phosphate: step 4/5. Functionally, catalyzes the reversible conversion of 2-phosphoglycerate (2-PG) into phosphoenolpyruvate (PEP). It is essential for the degradation of carbohydrates via glycolysis. The sequence is that of Enolase from Helicobacter pylori (strain HPAG1).